Here is a 203-residue protein sequence, read N- to C-terminus: HTH-type transcriptional regulator BetI (203 aa).

The 61-residue stretch at 8–68 (PVRRKALVDA…ATIRSLLGKL (61 aa)) folds into the HTH tetR-type domain. Residues 31–50 (TMSEIARTAGVSPALAHHYF) constitute a DNA-binding region (H-T-H motif).

Its pathway is amine and polyamine biosynthesis; betaine biosynthesis via choline pathway [regulation]. Functionally, repressor involved in the biosynthesis of the osmoprotectant glycine betaine. It represses transcription of the choline transporter BetT and the genes of BetAB involved in the synthesis of glycine betaine. This Rhizobium meliloti (strain 1021) (Ensifer meliloti) protein is HTH-type transcriptional regulator BetI.